A 267-amino-acid chain; its full sequence is tRNA-cytidine(32) 2-sulfurtransferase (267 aa).

A PP-loop motif motif is present at residues 37 to 42 (SGGKDS). [4Fe-4S] cluster contacts are provided by Cys-112, Cys-115, and Cys-203.

This sequence belongs to the TtcA family. In terms of assembly, homodimer. Mg(2+) serves as cofactor. The cofactor is [4Fe-4S] cluster.

It is found in the cytoplasm. It catalyses the reaction cytidine(32) in tRNA + S-sulfanyl-L-cysteinyl-[cysteine desulfurase] + AH2 + ATP = 2-thiocytidine(32) in tRNA + L-cysteinyl-[cysteine desulfurase] + A + AMP + diphosphate + H(+). The protein operates within tRNA modification. Catalyzes the ATP-dependent 2-thiolation of cytidine in position 32 of tRNA, to form 2-thiocytidine (s(2)C32). The sulfur atoms are provided by the cysteine/cysteine desulfurase (IscS) system. The polypeptide is tRNA-cytidine(32) 2-sulfurtransferase (Dichelobacter nodosus (strain VCS1703A)).